Here is a 560-residue protein sequence, read N- to C-terminus: MAKQIKFDSDARSALQEGVDQMAKAVKVTLGPKGRNVVLEKSFGAPTITKDGVTVAKEIELEERLPNIGAQVLKEAASKTNDDAGDGTTTATVLAQSVINAGMKSVTSGANPMDVKRGITAAAEEVVTHLRNQSDPVEGKDRISQVATISANNDDAIGDLIADAFERVGQDGVITVEEARGIETYLDVVEGMQFDRGYLSPYFVTDSEEMEAVLEDAYILIYDDEVGNMQDLLPILEKVSQTSNPLLIIAEDVEGEALATLVVNKMRGTLKVSAVKAPGFGDRRQSMLEDIAVLTGGTVISEEKGYRLENATLDYLGQADRVTIDQDNTTIVGGEGSEEEIEARVNQIRQQIANSTSDYDQEKLQERLAKLAGGVAVLNVGAATEPEMKAQKALVEDALSATRAAVDEGVLPGGGVAYLRALESIEEVEVENEDQEIGVSIVREALEAPLRQIAENTGHEGSIVVQKVKDGEGDFGFNARTEEYGDLLDQGVLDPTKVTRSALENAASVGGMLLTTEAVIADLEDEDDDDGGGGGGGGMPAGGAGGMGGMGGMGGMGGMM.

Residues 29 to 32, K50, 86 to 90, G414, and D494 contribute to the ATP site; these read TLGP and DGTTT. The disordered stretch occupies residues 524–546; that stretch reads EDEDDDDGGGGGGGGMPAGGAGG. Residues 532–546 are compositionally biased toward gly residues; the sequence is GGGGGGGMPAGGAGG.

This sequence belongs to the chaperonin (HSP60) family. Forms a cylinder of 14 subunits composed of two heptameric rings stacked back-to-back. Interacts with the co-chaperonin GroES.

The protein resides in the cytoplasm. It carries out the reaction ATP + H2O + a folded polypeptide = ADP + phosphate + an unfolded polypeptide.. In terms of biological role, together with its co-chaperonin GroES, plays an essential role in assisting protein folding. The GroEL-GroES system forms a nano-cage that allows encapsulation of the non-native substrate proteins and provides a physical environment optimized to promote and accelerate protein folding. The sequence is that of Chaperonin GroEL 2 from Salinibacter ruber (strain DSM 13855 / M31).